A 274-amino-acid chain; its full sequence is METRERDLERLIPMHKSGASPRDVVLSVPPSPLASPIHVAGKEAIYKVIRSWASKKFMTGCVILLPIAVTFYFTWWFIHFVDGFFSPIYTHLGINMFGLGFVTSITFIFMVGVFMSSWLGASVLSIGEWFIKKMPLVSYIYSASKQISGAISPDQSSGAFKEVAIIRHPHMGEYAFGFITSTVILRGRAGGEELCCVYVPTNHLYLGDIFLISSKDIIRPNLSVREGIEIVISGGMSIPHMLTTLDSETIHRMLESFGILEFGDVCLSLVLAWT.

At 1 to 60 (METRERDLERLIPMHKSGASPRDVVLSVPPSPLASPIHVAGKEAIYKVIRSWASKKFMTG) the chain is on the cytoplasmic side. Residues 61–81 (CVILLPIAVTFYFTWWFIHFV) form a helical membrane-spanning segment. The Extracellular segment spans residues 82 to 93 (DGFFSPIYTHLG). A helical membrane pass occupies residues 94–114 (INMFGLGFVTSITFIFMVGVF). Residues 115–274 (MSSWLGASVL…VCLSLVLAWT (160 aa)) are Cytoplasmic-facing.

Belongs to the plant COV1 protein family.

The protein localises to the membrane. This chain is Protein LIKE COV 3, found in Arabidopsis thaliana (Mouse-ear cress).